A 367-amino-acid chain; its full sequence is tRNA pseudouridine synthase D (367 aa).

Catalysis depends on Asp-80, which acts as the Nucleophile. A TRUD domain is found at 156–316; the sequence is GIPNWFGEQR…LKQERRALRL (161 aa).

The protein belongs to the pseudouridine synthase TruD family.

The catalysed reaction is uridine(13) in tRNA = pseudouridine(13) in tRNA. In terms of biological role, responsible for synthesis of pseudouridine from uracil-13 in transfer RNAs. The polypeptide is tRNA pseudouridine synthase D (Xanthomonas campestris pv. campestris (strain B100)).